The primary structure comprises 180 residues: MNTVLSRANSLFAFSLSVMAALTFGCFITTAFKERSVPVSIAVSRVTLRNVEDFTGPRERSDLAFVTFDITADLQSIFDWNVKQLFLYLSAEYSTKNNALNQVVLWDKIILRGDNPRLFLKDMKSKYFFFDDGNGLKGNRNVTLTLSWNVVPNAGLLPLVTGSGHMSVPFPDTYETTKSY.

Topologically, residues 1-11 are cytoplasmic; the sequence is MNTVLSRANSL. The chain crosses the membrane as a helical; Signal-anchor for type II membrane protein span at residues 12–32; it reads FAFSLSVMAALTFGCFITTAF. At 33 to 180 the chain is on the lumenal side; it reads KERSVPVSIA…PDTYETTKSY (148 aa). Residue N141 is glycosylated (N-linked (GlcNAc...) asparagine).

Belongs to the SPCS3 family. Component of the signal peptidase complex paralog A (SPC-A) composed of a catalytic subunit SEC11A and three accessory subunits SPCS1, SPCS2 and SPCS3. Component of the signal peptidase complex paralog C (SPC-C) composed of a catalytic subunit SEC11C and three accessory subunits SPCS1, SPCS2 and SPCS3. The complex induces a local thinning of the ER membrane which is used to measure the length of the signal peptide (SP) h-region of protein substrates. This ensures the selectivity of the complex towards h-regions shorter than 18-20 amino acids. In terms of tissue distribution, expressed in hen oviduct (at protein level).

It localises to the endoplasmic reticulum membrane. In terms of biological role, essential component of the signal peptidase complex (SPC) which catalyzes the cleavage of N-terminal signal sequences from nascent proteins as they are translocated into the lumen of the endoplasmic reticulum. Essential for the SPC catalytic activity, possibly by stabilizing and positioning the active center of the complex close to the lumenal surface. This Gallus gallus (Chicken) protein is Signal peptidase complex subunit 3.